We begin with the raw amino-acid sequence, 319 residues long: Ribonucleoside-diphosphate reductase 2 subunit beta (319 aa).

Residues D67, E98, and H101 each coordinate Fe cation. The active site involves Y105. Residues E158, E192, and H195 each coordinate Fe cation.

It belongs to the ribonucleoside diphosphate reductase small chain family. In terms of assembly, tetramer of two alpha and two beta subunits. The cofactor is Fe cation.

The enzyme catalyses a 2'-deoxyribonucleoside 5'-diphosphate + [thioredoxin]-disulfide + H2O = a ribonucleoside 5'-diphosphate + [thioredoxin]-dithiol. Its function is as follows. Provides the precursors necessary for DNA synthesis. Catalyzes the biosynthesis of deoxyribonucleotides from the corresponding ribonucleotides. R2F contains the tyrosyl radical required for catalysis. This is Ribonucleoside-diphosphate reductase 2 subunit beta (nrdF) from Escherichia coli (strain K12).